The following is a 188-amino-acid chain: D-glycero-beta-D-manno-heptose-1,7-bisphosphate 7-phosphatase (188 aa).

Cys92, His94, Cys107, and Cys109 together coordinate Zn(2+).

The protein belongs to the GmhB family.

It localises to the cytoplasm. It catalyses the reaction D-glycero-beta-D-manno-heptose 1,7-bisphosphate + H2O = D-glycero-beta-D-manno-heptose 1-phosphate + phosphate. The protein operates within nucleotide-sugar biosynthesis; ADP-L-glycero-beta-D-manno-heptose biosynthesis; ADP-L-glycero-beta-D-manno-heptose from D-glycero-beta-D-manno-heptose 7-phosphate: step 2/4. It participates in bacterial outer membrane biogenesis; LPS core biosynthesis. In terms of biological role, converts the D-glycero-beta-D-manno-heptose 1,7-bisphosphate intermediate into D-glycero-beta-D-manno-heptose 1-phosphate by removing the phosphate group at the C-7 position. This chain is D-glycero-beta-D-manno-heptose-1,7-bisphosphate 7-phosphatase (gmhB1), found in Photorhabdus laumondii subsp. laumondii (strain DSM 15139 / CIP 105565 / TT01) (Photorhabdus luminescens subsp. laumondii).